Reading from the N-terminus, the 105-residue chain is Large ribosomal subunit protein uL18c (105 aa).

The protein belongs to the universal ribosomal protein uL18 family. As to quaternary structure, part of the 50S ribosomal subunit; contacts the 5S rRNA.

Its subcellular location is the plastid. The protein localises to the chloroplast. In terms of biological role, binds 5S rRNA, forms part of the central protuberance of the 50S subunit. The polypeptide is Large ribosomal subunit protein uL18c (rpl18) (Gracilaria tenuistipitata var. liui (Red alga)).